The chain runs to 339 residues: Serine/threonine-protein kinase pdik1l-B (339 aa).

The Protein kinase domain maps to 8–332 (YDLIREVGRG…LELKLIQIAF (325 aa)). ATP contacts are provided by residues 14 to 22 (VGRGSYGLV) and lysine 37. Aspartate 164 acts as the Proton acceptor in catalysis.

This sequence belongs to the protein kinase superfamily. Ser/Thr protein kinase family.

The protein localises to the nucleus. It catalyses the reaction L-seryl-[protein] + ATP = O-phospho-L-seryl-[protein] + ADP + H(+). It carries out the reaction L-threonyl-[protein] + ATP = O-phospho-L-threonyl-[protein] + ADP + H(+). The polypeptide is Serine/threonine-protein kinase pdik1l-B (pdik1-b) (Xenopus laevis (African clawed frog)).